A 502-amino-acid polypeptide reads, in one-letter code: UPF0371 protein CLB_0371 (502 aa).

The protein belongs to the UPF0371 family.

The protein is UPF0371 protein CLB_0371 of Clostridium botulinum (strain ATCC 19397 / Type A).